The chain runs to 308 residues: E3 ubiquitin-protein ligase RING2 (308 aa).

At Ser-2 the chain carries N-acetylserine. The tract at residues 2–179 is interaction with HIP2; that stretch reads SQAVQTNGTQ…AEDNGDSSHC (178 aa). At Ser-41 the chain carries Phosphoserine. The segment at 51 to 91 adopts an RING-type zinc-finger fold; the sequence is CPICLDMLKNTMTTKECLHRFCADCIITALRSGNKECPTCR. The interaction with nucleosomes via an acidic patch on histone H2A and histone H2B stretch occupies residues 93–98; sequence KLVSKR. Lys-112 is covalently cross-linked (Glycyl lysine isopeptide (Lys-Gly) (interchain with G-Cter in ubiquitin)). Residues Ser-143 and Ser-168 each carry the phosphoserine modification. Residues 157–206 are disordered; sequence QRGKKQQIENGSGAEDNGDSSHCSNASTHSNQEAGPSNKRTKTSDDSGLE. A compositionally biased stretch (polar residues) spans 176–191; it reads SSHCSNASTHSNQEAG. Lys-249 is covalently cross-linked (Glycyl lysine isopeptide (Lys-Gly) (interchain with G-Cter in SUMO2)).

In terms of assembly, component of chromatin-associated Polycomb (PcG) complexes. Component of a number of PRC1-like complexes; these complexes contain either the polycomb group ring finger protein PCGF1, or PCGF2, or PCGF3, or BMI1, or PCGF5, or PCGF6. Distinct PRC1-like complexes are composed of a RING1 subunit (RING1B or RING1A), one of the six PCGF proteins (PCGF1, PCGF2, PCGF3, BMI1, PCGF5 or PCGF6), one PHC protein (PHC1, PHC2 or PHC3) and one of the CBX proteins (CBX2, CBX4, CBX6, CBX7 or CBX8). Part of a complex that contains RNF2, UB2D3 and BMI1; within that complex RNF2 and BMI1 form a tight heterodimer, where UB2D3 interacts only with RNF2. The complex composed of RNF2, UB2D3 and BMI1 binds nucleosomes, and has activity only with nucleosomal histone H2A. Part of a complex that contains PCGF5, RNF2 and UBE2D3. Part of a complex that contains AUTS2, PCGF5, RNF2, CSNK2B and RYBP. Interacts with CBX6 and CBX8. Interacts with PHC1, PCGF2, RYBP, CBX7, CBX4, CBX2, RNF1/RING1, BMI1 and PHC2. Interaction with RYBP and CBX7 is mutually exclusive; both compete for the same binding site on RNF2. Component of repressive BCOR complex containing a Polycomb group subcomplex at least composed of RYBP, PCGF1, BCOR and RING1. Interacts with CBX2 and PHC1. Interacts with CHTOP. Interacts with AURKB. Part of the E2F6.com-1 complex in G0 phase composed of E2F6, MGA, MAX, TFDP1, CBX3, BAT8, EUHMTASE1, RNF1/RING1, RNF2/RING2, MBLR, L3MBTL2 and YAF2. Component of some MLL1/MLL complex, at least composed of the core components KMT2A/MLL1, ASH2L, HCFC1/HCF1, WDR5 and RBBP5, as well as the facultative components BACC1, CHD8, E2F6, HSP70, INO80C, KANSL1, LAS1L, MAX, MCRS1, MGA, MYST1/MOF, PELP1, PHF20, PRP31, RING2, RUVB1/TIP49A, RUVB2/TIP49B, SENP3, TAF1, TAF4, TAF6, TAF7, TAF9 and TEX10. Interacts with RYBP, HIP2 and TFCP2. Interacts with NUPR1. Interacts with SAMD7 in a PHC2-dependent manner. In terms of processing, monoubiquitinated, by auto-ubiquitination. Polyubiquitinated in the presence of UBE2D3 (in vitro).

It is found in the nucleus. It localises to the cytoplasm. Its subcellular location is the chromosome. It carries out the reaction S-ubiquitinyl-[E2 ubiquitin-conjugating enzyme]-L-cysteine + [acceptor protein]-L-lysine = [E2 ubiquitin-conjugating enzyme]-L-cysteine + N(6)-ubiquitinyl-[acceptor protein]-L-lysine.. It functions in the pathway protein modification; protein ubiquitination. In terms of biological role, E3 ubiquitin-protein ligase that mediates monoubiquitination of 'Lys-119' of histone H2A (H2AK119Ub), thereby playing a central role in histone code and gene regulation. H2AK119Ub gives a specific tag for epigenetic transcriptional repression and participates in X chromosome inactivation of female mammals. May be involved in the initiation of both imprinted and random X inactivation. Essential component of a Polycomb group (PcG) multiprotein PRC1-like complex, a complex class required to maintain the transcriptionally repressive state of many genes, including Hox genes, throughout development. PcG PRC1 complex acts via chromatin remodeling and modification of histones, rendering chromatin heritably changed in its expressibility. E3 ubiquitin-protein ligase activity is enhanced by BMI1/PCGF4. Acts as the main E3 ubiquitin ligase on histone H2A of the PRC1 complex, while RING1 may rather act as a modulator of RNF2/RING2 activity. Plays a role in the transcriptional repression of genes that are required for pluripotency in embryonic stem cells, thereby contributing to differentiation of the ectodermal and endodermal germ layers. Association with the chromosomal DNA is cell-cycle dependent. In resting B- and T-lymphocytes, interaction with AURKB leads to block its activity, thereby maintaining transcription in resting lymphocytes. Also acts as a negative regulator of autophagy by mediating ubiquitination of AMBRA1, leading to its subsequent degradation. The protein is E3 ubiquitin-protein ligase RING2 (Rnf2) of Rattus norvegicus (Rat).